The chain runs to 386 residues: Homoserine O-succinyltransferase (386 aa).

An AB hydrolase-1 domain is found at 49–358; that stretch reads NAILICHALS…DAEQGHDSFL (310 aa). Serine 156 acts as the Nucleophile in catalysis. Arginine 226 serves as a coordination point for substrate. Catalysis depends on residues aspartate 321 and histidine 354. Residue aspartate 355 coordinates substrate.

This sequence belongs to the AB hydrolase superfamily. MetX family. Homodimer.

It localises to the cytoplasm. It carries out the reaction L-homoserine + succinyl-CoA = O-succinyl-L-homoserine + CoA. It functions in the pathway amino-acid biosynthesis; L-methionine biosynthesis via de novo pathway; O-succinyl-L-homoserine from L-homoserine: step 1/1. Transfers a succinyl group from succinyl-CoA to L-homoserine, forming succinyl-L-homoserine. This Acinetobacter baumannii (strain ACICU) protein is Homoserine O-succinyltransferase.